The sequence spans 126 residues: Profilin-1A (126 aa).

Residues 2 to 36 (SWQTYVDTNLVGTGAVTQAAILGLDGNTWATSAGF) are actin binding. At K104 the chain carries N6,N6,N6-trimethyllysine.

Belongs to the profilin family. In terms of assembly, occurs in many kinds of cells as a complex with monomeric actin in a 1:1 ratio.

It is found in the cytoplasm. Its subcellular location is the cytoskeleton. Binds to actin and affects the structure of the cytoskeleton. At high concentrations, profilin prevents the polymerization of actin, whereas it enhances it at low concentrations. By binding to PIP2, it inhibits the formation of IP3 and DG. The chain is Profilin-1A from Acanthamoeba castellanii (Amoeba).